The chain runs to 287 residues: tRNA selenocysteine 1-associated protein 1 (287 aa).

2 consecutive RRM domains span residues 3-86 (ASLW…YVTY) and 96-175 (YSLF…VAIP).

This sequence belongs to the RRM TRSPAP family. In terms of assembly, component of the tRNA(Sec) complex composed at least of EEFSEC, SECISBP2, SEPHS1, SEPSECS, TRNAU1AP and tRNA(Sec). Found in a complex with tRNA(Sec). Interacts with SEPSECS. Associates with mRNP and/or polysomes. Found in a complex with EEFSEC, SECISBP2, TRNAU1AP and tRNA(Sec).

Its subcellular location is the nucleus. The protein resides in the cytoplasm. Functionally, involved in the early steps of selenocysteine biosynthesis and tRNA(Sec) charging to the later steps resulting in the cotranslational incorporation of selenocysteine into selenoproteins. Stabilizes the SECISBP2, EEFSEC and tRNA(Sec) complex. May be involved in the methylation of tRNA(Sec). Enhances efficiency of selenoproteins synthesis. The polypeptide is tRNA selenocysteine 1-associated protein 1 (TRNAU1AP) (Pongo abelii (Sumatran orangutan)).